The chain runs to 125 residues: MPTISQLVRKPREVSVIKSKSPALENCPQRRGVCTRVYTTTPKKPNSALRKVAKVRLTNGYEVISYIGGEGHNLQEHSVVLVRGGRVKDLPGVRYHIVRGSLDLQGVKDRKQARSKYGAKRPKKA.

At Asp89 the chain carries 3-methylthioaspartic acid.

This sequence belongs to the universal ribosomal protein uS12 family. Part of the 30S ribosomal subunit. Contacts proteins S8 and S17. May interact with IF1 in the 30S initiation complex.

Functionally, with S4 and S5 plays an important role in translational accuracy. Interacts with and stabilizes bases of the 16S rRNA that are involved in tRNA selection in the A site and with the mRNA backbone. Located at the interface of the 30S and 50S subunits, it traverses the body of the 30S subunit contacting proteins on the other side and probably holding the rRNA structure together. The combined cluster of proteins S8, S12 and S17 appears to hold together the shoulder and platform of the 30S subunit. This is Small ribosomal subunit protein uS12 from Bordetella petrii (strain ATCC BAA-461 / DSM 12804 / CCUG 43448).